Consider the following 250-residue polypeptide: MEMKKRISLELRNRTPAEVAELVVDNCRSSDGEIEGLTDDFKELEFLSMVNVGLTSLAKLPSLPKLRKLELSDNNISGTLETLAEKCANLTYLNLSGNKIKELSTLEALQNLKNLKSLDLFNCEITTLEDYRESIFELLPQVTYLDGFDAEDNEAPDSEADDDDDDEDGDEGAGQLGEYEEEEEEDEEGSEGGEVGLSYLMKEDIQDEEDDDDYVEEEEEEGGEEEADVRGEKRKREAEDEGEDDDEDDD.

Residue S8 is modified to Phosphoserine. LRR repeat units follow at residues 43 to 64 (ELEFLSMVNVGLTSLAKLPSLP), 65 to 87 (KLRKLELSDNNISGTLETLAEKC), and 89 to 110 (NLTYLNLSGNKIKELSTLEALQ). One can recognise an LRRCT domain in the interval 123-161 (CEITTLEDYRESIFELLPQVTYLDGFDAEDNEAPDSEAD). Acidic residues-rich tracts occupy residues 149–171 (DAEDNEAPDSEADDDDDDEDGDE), 178–191 (EYEEEEEEDEEGSE), and 205–227 (IQDEEDDDDYVEEEEEEGGEEEA). Residues 149 to 250 (DAEDNEAPDS…EGEDDDEDDD (102 aa)) are disordered. Residues 194–247 (EVGLSYLMKEDIQDEEDDDDYVEEEEEEGGEEEADVRGEKRKREAEDEGEDDDE) form a ZID domain region. Basic and acidic residues predominate over residues 228–238 (DVRGEKRKREA). Residues 239–250 (EDEGEDDDEDDD) show a composition bias toward acidic residues.

It belongs to the ANP32 family. In terms of assembly, component of a SWR1-like complex. Interacts with H2A.Z/H2AZ1. Phosphorylated. The phosphorylation is nuclear localization signal (NLS)-dependent.

The protein resides in the cytoplasm. It localises to the nucleus. Functionally, histone chaperone that specifically mediates the genome-wide removal of histone H2A.Z/H2AZ1 from the nucleosome: removes H2A.Z/H2AZ1 from its normal sites of deposition, especially from enhancer and insulator regions. Not involved in deposition of H2A.Z/H2AZ1 in the nucleosome. May stabilize the evicted H2A.Z/H2AZ1-H2B dimer, thus shifting the equilibrium towards dissociation and the off-chromatin state. Inhibits activity of protein phosphatase 2A (PP2A). Does not inhibit protein phosphatase 1. May play a role in cerebellar development and synaptogenesis. The protein is Acidic leucine-rich nuclear phosphoprotein 32 family member E (anp32e) of Danio rerio (Zebrafish).